Here is a 448-residue protein sequence, read N- to C-terminus: uncharacterized protein (448 aa).

Residue 257 to 264 coordinates ATP; that stretch reads GRNAQGKT.

This is an uncharacterized protein from Methanocaldococcus jannaschii (strain ATCC 43067 / DSM 2661 / JAL-1 / JCM 10045 / NBRC 100440) (Methanococcus jannaschii).